The primary structure comprises 1297 residues: Phosphoribosylformylglycinamidine synthase (1297 aa).

ATP contacts are provided by residues 307 to 318 (GASTGSGGEIRD) and Ala-678. Mg(2+) contacts are provided by Glu-718, Asn-722, and Asp-886. Positions 1044-1297 (MAILREQGVN…MFQNARKNLG (254 aa)) constitute a Glutamine amidotransferase type-1 domain. Catalysis depends on Cys-1137, which acts as the Nucleophile. Residues His-1262 and Glu-1264 contribute to the active site.

This sequence in the N-terminal section; belongs to the FGAMS family. In terms of assembly, monomer.

The protein resides in the cytoplasm. It carries out the reaction N(2)-formyl-N(1)-(5-phospho-beta-D-ribosyl)glycinamide + L-glutamine + ATP + H2O = 2-formamido-N(1)-(5-O-phospho-beta-D-ribosyl)acetamidine + L-glutamate + ADP + phosphate + H(+). It functions in the pathway purine metabolism; IMP biosynthesis via de novo pathway; 5-amino-1-(5-phospho-D-ribosyl)imidazole from N(2)-formyl-N(1)-(5-phospho-D-ribosyl)glycinamide: step 1/2. Its function is as follows. Phosphoribosylformylglycinamidine synthase involved in the purines biosynthetic pathway. Catalyzes the ATP-dependent conversion of formylglycinamide ribonucleotide (FGAR) and glutamine to yield formylglycinamidine ribonucleotide (FGAM) and glutamate. This chain is Phosphoribosylformylglycinamidine synthase, found in Vibrio vulnificus (strain CMCP6).